The primary structure comprises 731 residues: 1,4-alpha-glucan branching enzyme GlgB (731 aa).

The Nucleophile role is filled by aspartate 411. Glutamate 464 (proton donor) is an active-site residue.

Belongs to the glycosyl hydrolase 13 family. GlgB subfamily. In terms of assembly, monomer.

It carries out the reaction Transfers a segment of a (1-&gt;4)-alpha-D-glucan chain to a primary hydroxy group in a similar glucan chain.. Its pathway is glycan biosynthesis; glycogen biosynthesis. Functionally, catalyzes the formation of the alpha-1,6-glucosidic linkages in glycogen by scission of a 1,4-alpha-linked oligosaccharide from growing alpha-1,4-glucan chains and the subsequent attachment of the oligosaccharide to the alpha-1,6 position. The chain is 1,4-alpha-glucan branching enzyme GlgB from Mycolicibacterium paratuberculosis (strain ATCC BAA-968 / K-10) (Mycobacterium paratuberculosis).